The following is a 362-amino-acid chain: Heat-inducible transcription repressor HrcA (362 aa).

This sequence belongs to the HrcA family.

Its function is as follows. Negative regulator of class I heat shock genes (grpE-dnaK-dnaJ and groELS operons). Prevents heat-shock induction of these operons. In Rhodopseudomonas palustris (strain ATCC BAA-98 / CGA009), this protein is Heat-inducible transcription repressor HrcA.